We begin with the raw amino-acid sequence, 337 residues long: Pyridoxal 5'-phosphate synthase subunit PdxS (337 aa).

Residue Asp-65 coordinates D-ribose 5-phosphate. The active-site Schiff-base intermediate with D-ribose 5-phosphate is the Lys-122. Gly-194 provides a ligand contact to D-ribose 5-phosphate. Position 206 (Lys-206) interacts with D-glyceraldehyde 3-phosphate. D-ribose 5-phosphate-binding positions include Gly-255 and 276–277; that span reads GS.

The protein belongs to the PdxS/SNZ family. In terms of assembly, in the presence of PdxT, forms a dodecamer of heterodimers.

It carries out the reaction aldehydo-D-ribose 5-phosphate + D-glyceraldehyde 3-phosphate + L-glutamine = pyridoxal 5'-phosphate + L-glutamate + phosphate + 3 H2O + H(+). Its pathway is cofactor biosynthesis; pyridoxal 5'-phosphate biosynthesis. In terms of biological role, catalyzes the formation of pyridoxal 5'-phosphate from ribose 5-phosphate (RBP), glyceraldehyde 3-phosphate (G3P) and ammonia. The ammonia is provided by the PdxT subunit. Can also use ribulose 5-phosphate and dihydroxyacetone phosphate as substrates, resulting from enzyme-catalyzed isomerization of RBP and G3P, respectively. In Pyrobaculum arsenaticum (strain DSM 13514 / JCM 11321 / PZ6), this protein is Pyridoxal 5'-phosphate synthase subunit PdxS.